The chain runs to 144 residues: Galectin a (144 aa).

The Galectin domain maps to 1–138 (DHIDLEFDVG…DAVLRKLCVV (138 aa)).

Tetramer.

Lectin that binds beta-galactoside and a wide array of complex carbohydrates. This is Galectin a from Aplysina lactuca (Marine sponge).